Here is a 441-residue protein sequence, read N- to C-terminus: Anti-sigma-I factor RsgI (441 aa).

Residues 1–53 lie on the Cytoplasmic side of the membrane; the sequence is MMNKGIVMDIKKHSVVVLTPNGEFITCKRKGDSCMIGEEISFDEQEQKASRFS. The 49-residue stretch at 3–51 folds into the RsgI N-terminal anti-sigma domain; it reads NKGIVMDIKKHSVVVLTPNGEFITCKRKGDSCMIGEEISFDEQEQKASR. Residues 54-76 traverse the membrane as a helical segment; sequence IPYFLKPASLLVACFLCALLFFY. Topologically, residues 77–441 are extracellular; that stretch reads NQPEEKVFAY…HQQGNEKKNQ (365 aa). Residues 213–441 form a disordered region; it reads ENEKNKSVTP…HQQGNEKKNQ (229 aa). Residues 219 to 230 are compositionally biased toward polar residues; that stretch reads SVTPPATPSNPV. The segment covering 240–251 has biased composition (low complexity); that stretch reads PDSSPDVVPDLS. Basic and acidic residues predominate over residues 252 to 281; that stretch reads SVKDKKYEKPEYKEQKKIEEQPTKQIKENN. 3 stretches are compositionally biased toward low complexity: residues 282-328, 336-358, and 366-408; these read GRGS…QQGN, NNGHQQENNGRGSQGNNGNQQGN, and NNGH…NGRG. Residues 411 to 428 show a composition bias toward polar residues; that stretch reads KENVGNEQGNNGRGSQQE. Residues 429-441 show a composition bias toward basic and acidic residues; sequence NRGHQQGNEKKNQ.

Interacts (via RsgI N-terminal anti-sigma domain) with SigI.

The protein localises to the cell membrane. Functionally, anti-sigma factor for SigI. Negatively regulates SigI activity through direct interaction. Has no direct effect on virulence gene expression. The chain is Anti-sigma-I factor RsgI from Bacillus anthracis.